The chain runs to 524 residues: Anthranilate synthase component 1 (524 aa).

L-tryptophan is bound by residues Ser-55 and 297-299 (PYM). 332–333 (GT) is a binding site for chorismate. Position 359 (Glu-359) interacts with Mg(2+). Chorismate-binding positions include Tyr-447, Arg-467, 485-487 (GAG), and Gly-487. Glu-500 provides a ligand contact to Mg(2+).

Belongs to the anthranilate synthase component I family. Heterotetramer consisting of two non-identical subunits: a beta subunit (TrpG) and a large alpha subunit (TrpE). It depends on Mg(2+) as a cofactor.

The catalysed reaction is chorismate + L-glutamine = anthranilate + pyruvate + L-glutamate + H(+). The protein operates within amino-acid biosynthesis; L-tryptophan biosynthesis; L-tryptophan from chorismate: step 1/5. Its activity is regulated as follows. Feedback inhibited by tryptophan. Functionally, part of a heterotetrameric complex that catalyzes the two-step biosynthesis of anthranilate, an intermediate in the biosynthesis of L-tryptophan. In the first step, the glutamine-binding beta subunit (TrpG) of anthranilate synthase (AS) provides the glutamine amidotransferase activity which generates ammonia as a substrate that, along with chorismate, is used in the second step, catalyzed by the large alpha subunit of AS (TrpE) to produce anthranilate. In the absence of TrpG, TrpE can synthesize anthranilate directly from chorismate and high concentrations of ammonia. This is Anthranilate synthase component 1 (trpE) from Haloferax volcanii (strain ATCC 29605 / DSM 3757 / JCM 8879 / NBRC 14742 / NCIMB 2012 / VKM B-1768 / DS2) (Halobacterium volcanii).